The following is a 908-amino-acid chain: Zinc finger and BTB domain-containing protein 41 (908 aa).

The tract at residues 38–59 is disordered; it reads TQAPERPTPEAAQRCQELPPSP. Residues 89–153 enclose the BTB domain; sequence CDLLIIVEGK…LYTSEFFVYK (65 aa). Residues 208-231 form a C2H2-type 1 zinc finger; that stretch reads HQCKFCSRHFCYKKSLENHLAKTH. Positions 252–261 are enriched in basic residues; that stretch reads RRSKRNRKCP. Positions 252-344 are disordered; sequence RRSKRNRKCP…EAGDSAGSIH (93 aa). The span at 267–276 shows a compositional bias: acidic residues; it reads TSDDEQESGD. Residues 279–296 show a composition bias toward basic and acidic residues; sequence DNLHQESSEKERSDRNDS. Positions 297-336 are enriched in acidic residues; it reads EDPGSEYNAEDEELEEEVSDEDSDTEQSDKDNDAEEEPEA. C2H2-type zinc fingers lie at residues 360–382, 388–410, 421–444, 462–484, 490–513, 517–540, 546–568, 574–596, 602–624, 630–653, 667–689, 695–717, and 723–746; these read LQCP…TRVH, FECD…RKKH, HKCP…KRFH, WKCD…MILH, FKCT…EKFH, FPCD…ECTH, WTCF…LRIH, HLCS…LRVH, YECD…KKIH, HQCE…KSVH, HQCD…FRTH, YKCQ…LVIH, and FNCQ…DHVH.

The protein resides in the nucleus. In terms of biological role, may be involved in transcriptional regulation. This chain is Zinc finger and BTB domain-containing protein 41 (Zbtb41), found in Mus musculus (Mouse).